The following is a 130-amino-acid chain: Small ribosomal subunit protein uS9 (130 aa).

The interval 105 to 130 (TRDSRMKERKKPGLKGARRAPQFSKR) is disordered. Basic residues predominate over residues 111-130 (KERKKPGLKGARRAPQFSKR).

Belongs to the universal ribosomal protein uS9 family.

The sequence is that of Small ribosomal subunit protein uS9 from Listeria welshimeri serovar 6b (strain ATCC 35897 / DSM 20650 / CCUG 15529 / CIP 8149 / NCTC 11857 / SLCC 5334 / V8).